Consider the following 450-residue polypeptide: tRNA modification GTPase MnmE (450 aa).

(6S)-5-formyl-5,6,7,8-tetrahydrofolate contacts are provided by R23, E79, and K118. Residues 214–374 form the TrmE-type G domain; the sequence is GITLILVGKP…LKDHILAKVG (161 aa). A K(+)-binding site is contributed by N224. Residues 224–229, 243–249, and 268–271 each bind GTP; these read NAGKSS, TSIAGTT, and DTAG. S228 is a binding site for Mg(2+). Positions 243, 245, and 248 each coordinate K(+). T249 provides a ligand contact to Mg(2+). K450 lines the (6S)-5-formyl-5,6,7,8-tetrahydrofolate pocket.

Belongs to the TRAFAC class TrmE-Era-EngA-EngB-Septin-like GTPase superfamily. TrmE GTPase family. As to quaternary structure, homodimer. Heterotetramer of two MnmE and two MnmG subunits. K(+) is required as a cofactor.

It is found in the cytoplasm. In terms of biological role, exhibits a very high intrinsic GTPase hydrolysis rate. Involved in the addition of a carboxymethylaminomethyl (cmnm) group at the wobble position (U34) of certain tRNAs, forming tRNA-cmnm(5)s(2)U34. In Francisella philomiragia subsp. philomiragia (strain ATCC 25017 / CCUG 19701 / FSC 153 / O#319-036), this protein is tRNA modification GTPase MnmE.